The chain runs to 224 residues: Small ribosomal subunit protein uS3 (224 aa).

In terms of domain architecture, KH type-2 spans L20 to P89.

Belongs to the universal ribosomal protein uS3 family. In terms of assembly, part of the 30S ribosomal subunit.

Binds the lower part of the 30S subunit head. In Staphylothermus marinus (strain ATCC 43588 / DSM 3639 / JCM 9404 / F1), this protein is Small ribosomal subunit protein uS3.